Reading from the N-terminus, the 536-residue chain is 3',5'-cyclic-AMP phosphodiesterase 4C (536 aa).

Residues 49–69 are disordered; that stretch reads QALLGTPPQSSQQAAPAEESG. The PDEase domain maps to 178–507; sequence VQTDQEEQLA…EWYQSRVPCS (330 aa). The Proton donor role is filled by histidine 254. Residue histidine 254 participates in 3',5'-cyclic AMP binding. Residues histidine 254 and histidine 258 each coordinate AMP. Histidine 258, histidine 294, aspartate 295, and aspartate 412 together coordinate Zn(2+). AMP-binding residues include aspartate 295, aspartate 412, glutamine 463, and phenylalanine 466. Aspartate 295 contacts Mg(2+). Residue aspartate 295 participates in Mn(2+) binding. The 3',5'-cyclic AMP site is built by glutamine 463 and phenylalanine 466. Phosphoserine is present on serine 507.

It belongs to the cyclic nucleotide phosphodiesterase family. PDE4 subfamily. As to quaternary structure, part of a complex containing AKAP5, ADCY5, ADCY6 and PKD2. Zn(2+) is required as a cofactor. Requires Mg(2+) as cofactor. It depends on Mn(2+) as a cofactor.

It localises to the cell projection. Its subcellular location is the cilium. It catalyses the reaction 3',5'-cyclic AMP + H2O = AMP + H(+). The protein operates within purine metabolism; 3',5'-cyclic AMP degradation; AMP from 3',5'-cyclic AMP: step 1/1. Functionally, hydrolyzes the second messenger cAMP, which is a key regulator of many important physiological processes. The chain is 3',5'-cyclic-AMP phosphodiesterase 4C from Rattus norvegicus (Rat).